Here is a 206-residue protein sequence, read N- to C-terminus: Cytochrome c biogenesis ATP-binding export protein CcmA (206 aa).

The ABC transporter domain maps to 3–206; it reads VSVDDLCVTR…LAGASDEAFL (204 aa). 35-42 provides a ligand contact to ATP; it reads GPNGSGKT.

The protein belongs to the ABC transporter superfamily. CcmA exporter (TC 3.A.1.107) family. In terms of assembly, the complex is composed of two ATP-binding proteins (CcmA) and two transmembrane proteins (CcmB).

It localises to the cell inner membrane. The catalysed reaction is heme b(in) + ATP + H2O = heme b(out) + ADP + phosphate + H(+). In terms of biological role, part of the ABC transporter complex CcmAB involved in the biogenesis of c-type cytochromes; once thought to export heme, this seems not to be the case, but its exact role is uncertain. Responsible for energy coupling to the transport system. This Roseobacter denitrificans (strain ATCC 33942 / OCh 114) (Erythrobacter sp. (strain OCh 114)) protein is Cytochrome c biogenesis ATP-binding export protein CcmA.